We begin with the raw amino-acid sequence, 170 residues long: MKNFNGKLILIGLMGAGKTTLGRQMAQRLDYRFYDSDHEIAAAAGVPIPTIFEMEGEQGFRSRETAILKKLIVLPHIVLSTGGGAVLKEENRALIRKSGTVVYLHAPPETLLERTRCDNSRPLLQVADPLAKLRELYAARDPVYRQTADFTVESANCRETVQTLLKRLSR.

15–20 contributes to the ATP binding site; it reads GAGKTT. Threonine 19 contributes to the Mg(2+) binding site. Positions 37, 61, and 83 each coordinate substrate. Arginine 121 provides a ligand contact to ATP. Residue arginine 140 participates in substrate binding.

The protein belongs to the shikimate kinase family. In terms of assembly, monomer. The cofactor is Mg(2+).

It localises to the cytoplasm. It catalyses the reaction shikimate + ATP = 3-phosphoshikimate + ADP + H(+). It functions in the pathway metabolic intermediate biosynthesis; chorismate biosynthesis; chorismate from D-erythrose 4-phosphate and phosphoenolpyruvate: step 5/7. Its function is as follows. Catalyzes the specific phosphorylation of the 3-hydroxyl group of shikimic acid using ATP as a cosubstrate. In Neisseria gonorrhoeae (strain ATCC 700825 / FA 1090), this protein is Shikimate kinase.